The following is a 1744-amino-acid chain: Myotubularin-related protein 5 (1744 aa).

The 137-residue stretch at 14–150 folds into the uDENN domain; the sequence is DTVAVIVLEE…IRFLTYELVE (137 aa). A cDENN domain is found at 165-304; sequence ELGFELIPIS…YYNSLHQRLR (140 aa). Residues 306 to 412 enclose the dDENN domain; sequence VMFTTTSQED…LTRALPRRKH (107 aa). One can recognise a GRAM domain in the interval 787 to 871; it reads KGNFDPVLAH…LYSMESFKKL (85 aa). The region spanning 996 to 1447 is the Myotubularin phosphatase domain; the sequence is NAHIRYAVID…PQIHMWPFLA (452 aa). Residues 1102-1116 show a composition bias toward polar residues; it reads TGSMTGSQQTLHSKA. Residues 1102-1123 form a disordered region; sequence TGSMTGSQQTLHSKASSNEESS. The Phorbol-ester/DAG-type zinc finger occupies 1540–1590; it reads IHELTPFTVGARPVQCCYCTNILTRWSKAVHCKKCRIHVHEGCVNRNITIG. The PH domain occupies 1643 to 1743; the sequence is PPLCTGYLSK…WKECIEQVIR (101 aa).

Belongs to the protein-tyrosine phosphatase family. Non-receptor class myotubularin subfamily.

Probably acts as an adapter for other myotubularin-like phosphatases. This is Myotubularin-related protein 5 from Caenorhabditis elegans.